The primary structure comprises 595 residues: UvrABC system protein C (595 aa).

In terms of domain architecture, GIY-YIG spans 14–91 (SNPGCYLHKD…IQENMPKFNI (78 aa)). A UVR domain is found at 196–231 (DKIVNQLKAKMKDMSDQMAFERAAEYRDLIEAVSTL).

Belongs to the UvrC family. As to quaternary structure, interacts with UvrB in an incision complex.

It is found in the cytoplasm. Its function is as follows. The UvrABC repair system catalyzes the recognition and processing of DNA lesions. UvrC both incises the 5' and 3' sides of the lesion. The N-terminal half is responsible for the 3' incision and the C-terminal half is responsible for the 5' incision. The chain is UvrABC system protein C from Streptococcus thermophilus (strain ATCC BAA-491 / LMD-9).